The chain runs to 239 residues: RNA polymerase sigma factor FliA (239 aa).

A sigma-70 factor domain-2 region spans residues 16 to 88; that stretch reads LWQRYVPLVR…MLDELRSRDW (73 aa). An Interaction with polymerase core subunit RpoC motif is present at residues 43–46; the sequence is DLLQ. The tract at residues 96–166 is sigma-70 factor domain-3; the sequence is NAREVAQAIG…IELVTDDHQR (71 aa). Positions 185–233 are sigma-70 factor domain-4; that stretch reads AIETLPEREKLVLTLYYQEELNLKEIGAVLEVGESRVSQLHSQAIKRLR. The H-T-H motif DNA-binding region spans 207 to 226; the sequence is LKEIGAVLEVGESRVSQLHS.

Belongs to the sigma-70 factor family. FliA subfamily.

The protein localises to the cytoplasm. Functionally, sigma factors are initiation factors that promote the attachment of RNA polymerase to specific initiation sites and are then released. This sigma factor controls the expression of flagella-related genes. This chain is RNA polymerase sigma factor FliA, found in Escherichia coli O157:H7.